We begin with the raw amino-acid sequence, 136 residues long: Probable disulfide formation protein (136 aa).

Residues 7–26 form a helical membrane-spanning segment; sequence SYALYFAWAISCAGTLISIF. Residues cysteine 36 and cysteine 39 are joined by a disulfide bond. The next 2 membrane-spanning stretches (helical) occupy residues 41–60 and 67–84; these read YQRI…AYRE and YILP…YQVF. An intrachain disulfide couples cysteine 96 to cysteine 101. A helical membrane pass occupies residues 109-131; that stretch reads SYVTIPMASVVAFGAIVCLLVLT.

It belongs to the DsbB family. BdbC subfamily.

The protein localises to the cell inner membrane. In terms of biological role, required for disulfide bond formation in some proteins. This Chlamydia pneumoniae (Chlamydophila pneumoniae) protein is Probable disulfide formation protein.